Here is a 317-residue protein sequence, read N- to C-terminus: Orange carotenoid-binding protein (317 aa).

The 152-residue stretch at 18-169 (ADVVPATIAR…DMGFTAGKDG (152 aa)) folds into the OCP N-terminal domain. Residues 34–38 (EDQLA), 37–44 (LALIWFAY), 80–83 (TQAM), 107–117 (LGFWYRLGELM), 125–129 (IPAGY), 151–161 (ITVLRNAVVDM), Tyr201, 245–250 (CQNLKL), 273–284 (VQTPWFGGNVGM), and Trp288 contribute to the echinenone site.

Belongs to the orange carotenoid-binding protein family. As to quaternary structure, monomer. Interacts with the APC core of the phycobilisome (PB), probably at a ratio of 1:1 in a light-independent manner; possibly only OCP-R binds to PBs. Interacts with FRP. Detachment from PBs is accelerated by FPR. 3'-hydroxyechinenone is required as a cofactor. In terms of processing, proteolytically cleaved into a red 16.7 kDa form named red carotenoid-binding protein (RCP) which lacks 15 residues from the N-terminus and approximately 150 residues from the C-terminus.

It localises to the cellular thylakoid membrane. Its function is as follows. Acts as a blue-light photoreceptor and photo-protectant. Essential for inhibiting damaged induced by excess blue-green light via a process known as non-photochemical quenching (NPQ). In the dark or dim light the stable inactive form (OCP-O) is orange, upon illumination with blue-green light it converts to a metastable active red form (OCP-R), inducing energy dissipation, quenching cellular fluorescence via NPQ. One OCP-R molecule is sufficient to quench 1 phycobilisome. More OCP-R accumulates under high-light and low temperature; in the dark OCP-R spontaneously reverts to OCP-O. Reversion of OCP-O is accelerated by FRP. A kinetic study suggests conversion of OCP-O to OCP-R is limited by cis-trans proline isomerization of either Gln224-Pro225 or Pro225-Pro226. The sequence is that of Orange carotenoid-binding protein from Synechocystis sp. (strain ATCC 27184 / PCC 6803 / Kazusa).